The following is a 360-amino-acid chain: Dehydrogenase mokE (360 aa).

50–53 contributes to the NADP(+) binding site; sequence SDTK. 134–141 contacts substrate; that stretch reads AGISTAGL. NADP(+) is bound by residues 173 to 176, 196 to 199, Tyr-214, 261 to 262, and Thr-279; these read STAT, SPHN, and LN. 281–285 provides a ligand contact to substrate; the sequence is GPTIF. Position 350–351 (350–351) interacts with NADP(+); that stretch reads LS.

It belongs to the zinc-containing alcohol dehydrogenase family. In terms of assembly, monomer.

Its pathway is polyketide biosynthesis; lovastatin biosynthesis. Dehydrogenase; part of the gene cluster that mediates the biosynthesis of monakolin K, also known as lovastatin, and which acts as a potent competitive inhibitor of HMG-CoA reductase. Monakolin K biosynthesis is performed in two stages. The first stage is catalyzed by the nonaketide synthase mokA, which belongs to type I polyketide synthases and catalyzes the iterative nine-step formation of the polyketide. This PKS stage is completed by the action of dehydrogenase mokE, which catalyzes the NADPH-dependent reduction of the unsaturated tetra-, penta- and heptaketide intermediates that arise during the mokA-mediated biosynthesis of the nonaketide chain and leads to dihydromonacolin L. Covalently bound dihydromonacolin L is released from mokA by the mokD esterase. Conversion of dihydromonacolin L into monacolin L and then monacolin J is subsequently performed with the participation of molecular oxygen and P450 monoogygenase mokC. Finally, mokF performs the conversion of monacoline J to monacoline K through the addition of the side-chain diketide moiety (2R)-2-methylbutanoate produced by the diketide synthase mokB. In Monascus pilosus (Red mold), this protein is Dehydrogenase mokE.